Reading from the N-terminus, the 246-residue chain is Type III pantothenate kinase (246 aa).

Asp-6–Val-13 is an ATP binding site. Substrate is bound at residue Gly-103–Arg-106. Catalysis depends on Asp-105, which acts as the Proton acceptor. A K(+)-binding site is contributed by Asp-125. Thr-128 is an ATP binding site. A substrate-binding site is contributed by Thr-179.

Belongs to the type III pantothenate kinase family. Homodimer. The cofactor is NH4(+). It depends on K(+) as a cofactor.

It is found in the cytoplasm. It carries out the reaction (R)-pantothenate + ATP = (R)-4'-phosphopantothenate + ADP + H(+). It functions in the pathway cofactor biosynthesis; coenzyme A biosynthesis; CoA from (R)-pantothenate: step 1/5. Catalyzes the phosphorylation of pantothenate (Pan), the first step in CoA biosynthesis. This is Type III pantothenate kinase from Thermotoga sp. (strain RQ2).